Reading from the N-terminus, the 151-residue chain is MTIKPSDSVSWFQVLQRGQHYMKTWPADKRLAPVFPENRVTVVTRFGIRFMPPLAIFTLTWQIALGGQLGPAIATALFACGLPLQGLWWLGKRAITPLPPTLLQWFHEVRHKLFEAGQAVAPIEPIPTYQSLADLLKRAFKQLDKTFLDDL.

2 consecutive transmembrane segments (helical) span residues 46 to 66 and 69 to 89; these read FGIR…IALG and LGPA…GLWW.

It belongs to the UPF0208 family.

The protein resides in the cell inner membrane. This is UPF0208 membrane protein YPDSF_1972 from Yersinia pestis (strain Pestoides F).